The primary structure comprises 429 residues: 3-phosphoshikimate 1-carboxyvinyltransferase (429 aa).

Residues K20, S21, and R25 each coordinate 3-phosphoshikimate. K20 serves as a coordination point for phosphoenolpyruvate. 2 residues coordinate phosphoenolpyruvate: G89 and R118. 6 residues coordinate 3-phosphoshikimate: S164, S165, Q166, S192, D311, and K338. Position 166 (Q166) interacts with phosphoenolpyruvate. The Proton acceptor role is filled by D311. The phosphoenolpyruvate site is built by R342 and R384.

Belongs to the EPSP synthase family. Monomer.

It localises to the cytoplasm. It catalyses the reaction 3-phosphoshikimate + phosphoenolpyruvate = 5-O-(1-carboxyvinyl)-3-phosphoshikimate + phosphate. Its pathway is metabolic intermediate biosynthesis; chorismate biosynthesis. Its function is as follows. Catalyzes the transfer of the enolpyruvyl moiety of phosphoenolpyruvate (PEP) to the 5-hydroxyl of shikimate-3-phosphate (S3P) to produce enolpyruvyl shikimate-3-phosphate and inorganic phosphate. The protein is 3-phosphoshikimate 1-carboxyvinyltransferase of Methanococcus maripaludis (strain C7 / ATCC BAA-1331).